A 381-amino-acid polypeptide reads, in one-letter code: Neuropeptide Y receptor type 2 (381 aa).

The interval 1–35 (MGPIGAEADENQTVEEMKVEQYGPQTTPRGELVPD) is disordered. The Extracellular segment spans residues 1 to 51 (MGPIGAEADENQTVEEMKVEQYGPQTTPRGELVPDPEPELIDSTKLIEVQV). An N-linked (GlcNAc...) asparagine glycan is attached at Asn11. A helical membrane pass occupies residues 52–72 (VLILAYCSIILLGVIGNSLVI). The Cytoplasmic portion of the chain corresponds to 73-86 (HVVIKFKSMRTVTN). A helical membrane pass occupies residues 87–107 (FFIANLAVADLLVNTLCLPFT). At 108–124 (LTYTLMGEWKMGPVLCH) the chain is on the extracellular side. Residues Cys123 and Cys203 are joined by a disulfide bond. Residues 125 to 145 (LVPYAQGLAVQVSTITLTVIA) form a helical membrane-spanning segment. Over 146–165 (LDRHRCIVYHLESKISKRIS) the chain is Cytoplasmic. Residues 166-186 (FLIIGLAWGISALLASPLAIF) traverse the membrane as a helical segment. Over 187-216 (REYSLIEIIPDFEIVACTEKWPGEEKSIYG) the chain is Extracellular. A helical transmembrane segment spans residues 217–237 (TVYSLSSLLILYVLPLGIISF). Topologically, residues 238-268 (SYTRIWSKLKNHVSPGAANDHYHQRRQKTTK) are cytoplasmic. The chain crosses the membrane as a helical span at residues 269–289 (MLVCVVVVFAVSWLPLHAFQL). Residues 290–304 (AVDIDSQVLDLKEYK) are Extracellular-facing. A helical membrane pass occupies residues 305–325 (LIFTVFHIIAMCSTFANPLLY). The Cytoplasmic portion of the chain corresponds to 326–381 (GWMNSNYRKAFLSAFRCEQRLDAIHSEVSVTFKAKKNLEVRKNSGPNDSFTEATNV). Residue Cys342 is the site of S-palmitoyl cysteine attachment.

The protein belongs to the G-protein coupled receptor 1 family. As to expression, high levels in amygdala, corpus callosum, hippocampus and subthalamic nucleus. Also detectable in caudate nucleus, hypothalamus and substantia nigra.

The protein resides in the cell membrane. Receptor for neuropeptide Y and peptide YY. The rank order of affinity of this receptor for pancreatic polypeptides is PYY &gt; NPY &gt; PYY (3-36) &gt; NPY (2-36) &gt; [Ile-31, Gln-34] PP &gt; [Leu-31, Pro-34] NPY &gt; PP, [Pro-34] PYY and NPY free acid. This Homo sapiens (Human) protein is Neuropeptide Y receptor type 2 (NPY2R).